The chain runs to 432 residues: 3-phosphoshikimate 1-carboxyvinyltransferase (432 aa).

3-phosphoshikimate-binding residues include K22, S23, and R27. K22 lines the phosphoenolpyruvate pocket. Phosphoenolpyruvate is bound by residues G96 and R127. S173, S174, Q175, S201, D316, N339, and K343 together coordinate 3-phosphoshikimate. Q175 is a binding site for phosphoenolpyruvate. D316 (proton acceptor) is an active-site residue. Residues R347, R391, and K416 each contribute to the phosphoenolpyruvate site.

Belongs to the EPSP synthase family. Monomer.

It is found in the cytoplasm. The enzyme catalyses 3-phosphoshikimate + phosphoenolpyruvate = 5-O-(1-carboxyvinyl)-3-phosphoshikimate + phosphate. Its pathway is metabolic intermediate biosynthesis; chorismate biosynthesis; chorismate from D-erythrose 4-phosphate and phosphoenolpyruvate: step 6/7. In terms of biological role, catalyzes the transfer of the enolpyruvyl moiety of phosphoenolpyruvate (PEP) to the 5-hydroxyl of shikimate-3-phosphate (S3P) to produce enolpyruvyl shikimate-3-phosphate and inorganic phosphate. The chain is 3-phosphoshikimate 1-carboxyvinyltransferase from Haemophilus influenzae (strain ATCC 51907 / DSM 11121 / KW20 / Rd).